Consider the following 491-residue polypeptide: Phosphoethanolamine N-methyltransferase 1 (491 aa).

N-acetylalanine is present on A2. Positions 61, 66, 82, 107, 108, and 126 each coordinate S-adenosyl-L-homocysteine. 5 residues coordinate phosphocholine: S159, S164, G165, R169, and Y176. N-methylethanolamine phosphate is bound by residues 245-246 (QY) and Y254. Residue Y254 participates in phosphocholine binding. 7 residues coordinate S-adenosyl-L-homocysteine: V263, S264, G290, D312, D338, C339, and R355. Phosphocholine contacts are provided by Y386, Y400, R404, Y406, and K472. N-methylethanolamine phosphate-binding positions include Y386, Y400, 404–406 (RGY), and K472.

Belongs to the class I-like SAM-binding methyltransferase superfamily. PEAMT family. In terms of tissue distribution, highly expressed in the meristem and elongation zones of the root. Expressed in differentiated root epidermal cells. Highly expressed in leaf vasculature.

The protein resides in the cytoplasm. The enzyme catalyses phosphoethanolamine + S-adenosyl-L-methionine = N-methylethanolamine phosphate + S-adenosyl-L-homocysteine + H(+). It catalyses the reaction N-methylethanolamine phosphate + S-adenosyl-L-methionine = N,N-dimethylethanolamine phosphate + S-adenosyl-L-homocysteine + H(+). The catalysed reaction is N,N-dimethylethanolamine phosphate + S-adenosyl-L-methionine = phosphocholine + S-adenosyl-L-homocysteine + H(+). It functions in the pathway phospholipid metabolism; phosphatidylcholine biosynthesis; phosphocholine from phosphoethanolamine: step 1/1. Functionally, involved in phosphocholine biosynthesis. Catalyzes the N-methylation of phosphoethanolamine, phosphomonomethylethanolamine and phosphodimethylethanolamine, the three methylation steps required to convert phosphoethanolamine to phosphocholine (PC). Required for root system development and epidermal cell integrity through its role in choline and phospholipid metabolism. In association with NMT3, regulates PC homeostasis, phase transition at the shoot apex, coordinated organ development, and fertility. In association with NMT3, involved in phosphatidylcholine biosynthesis and vascular development. In association with NMT2, involved in the production of phosphatidylcholine in roots, essential for root development. In association with NMT2 produce phosphocholine mainly for leaf growth maintenance. Contributes to the regulation of overall root zonation dynamics through reactive oxygen species (ROS) and auxin-regulated cell differentiation. Participates in root development of primary root elongation under salt stress conditions by balancing reactive oxygen species (ROS) production and distribution through abscisic acid (ABA) signaling. The protein is Phosphoethanolamine N-methyltransferase 1 of Arabidopsis thaliana (Mouse-ear cress).